The sequence spans 148 residues: Holo-[acyl-carrier-protein] synthase (148 aa).

Mg(2+) contacts are provided by aspartate 8 and glutamate 57.

The protein belongs to the P-Pant transferase superfamily. AcpS family. Mg(2+) is required as a cofactor.

Its subcellular location is the cytoplasm. The enzyme catalyses apo-[ACP] + CoA = holo-[ACP] + adenosine 3',5'-bisphosphate + H(+). In terms of biological role, transfers the 4'-phosphopantetheine moiety from coenzyme A to a Ser of acyl-carrier-protein. This chain is Holo-[acyl-carrier-protein] synthase, found in Ruegeria pomeroyi (strain ATCC 700808 / DSM 15171 / DSS-3) (Silicibacter pomeroyi).